A 372-amino-acid chain; its full sequence is GRASP65 homolog protein 1 (372 aa).

Methionine 1 bears the N-acetylmethionine mark. 2 consecutive PDZ GRASP-type domains span residues 66-183 (SGLR…WTPL) and 188-276 (FTYH…YGFL). The interval 66 to 292 (SGLRIVWVDE…KHCPQQAQQQ (227 aa)) is GRASP. At serine 155 the chain carries Phosphoserine. The tract at residues 312–372 (VPSAFTAPPV…PPPQKQSSSD (61 aa)) is disordered.

As to quaternary structure, homodimer. Interacts with BUG1 (via C-terminus), probably forming a heterooligomer consisting of a GRH1 dimer and a BUG1 dimer. Interacts with COPII coat components SEC23, SEC24, SFB2 and SFB3. Post-translationally, N-terminal acetylation; by N-terminal acetyltransferase NatC.

It localises to the cytoplasm. The protein resides in the golgi apparatus. It is found in the cis-Golgi network membrane. Functionally, involved in the spindle assembly checkpoint. Involved in ER to Golgi vesicle-mediated transport by either facilitating USO1-dependent and -independent tethering or increasing target accuracy of fusion events of COPII-coated vesicles. The sequence is that of GRASP65 homolog protein 1 (GRH1) from Saccharomyces cerevisiae (strain ATCC 204508 / S288c) (Baker's yeast).